Here is a 275-residue protein sequence, read N- to C-terminus: Translation initiation factor 2 subunit alpha (275 aa).

Residues 12 to 83 form the S1 motif domain; it reads GELVVATVKR…KKGHIDLSLR (72 aa).

The protein belongs to the eIF-2-alpha family. In terms of assembly, heterotrimer composed of an alpha, a beta and a gamma chain.

Its function is as follows. eIF-2 functions in the early steps of protein synthesis by forming a ternary complex with GTP and initiator tRNA. The protein is Translation initiation factor 2 subunit alpha of Pyrococcus furiosus (strain ATCC 43587 / DSM 3638 / JCM 8422 / Vc1).